Consider the following 89-residue polypeptide: Small ribosomal subunit protein uS15 (89 aa).

The segment covering 1-21 (MSITPERKQEMIKDYATKEGD) has biased composition (basic and acidic residues). Residues 1 to 23 (MSITPERKQEMIKDYATKEGDTG) are disordered.

The protein belongs to the universal ribosomal protein uS15 family. As to quaternary structure, part of the 30S ribosomal subunit. Forms a bridge to the 50S subunit in the 70S ribosome, contacting the 23S rRNA.

Its function is as follows. One of the primary rRNA binding proteins, it binds directly to 16S rRNA where it helps nucleate assembly of the platform of the 30S subunit by binding and bridging several RNA helices of the 16S rRNA. Functionally, forms an intersubunit bridge (bridge B4) with the 23S rRNA of the 50S subunit in the ribosome. The chain is Small ribosomal subunit protein uS15 from Rhodospirillum rubrum (strain ATCC 11170 / ATH 1.1.1 / DSM 467 / LMG 4362 / NCIMB 8255 / S1).